The chain runs to 61 residues: Small ribosomal subunit protein uS14 (61 aa).

Zn(2+) is bound by residues cysteine 24, cysteine 27, cysteine 40, and cysteine 43.

Belongs to the universal ribosomal protein uS14 family. Zinc-binding uS14 subfamily. Part of the 30S ribosomal subunit. Contacts proteins S3 and S10. Zn(2+) serves as cofactor.

Binds 16S rRNA, required for the assembly of 30S particles and may also be responsible for determining the conformation of the 16S rRNA at the A site. The protein is Small ribosomal subunit protein uS14 of Helicobacter pylori (strain G27).